The chain runs to 435 residues: Type A flavoprotein fprA (435 aa).

A zinc metallo-hydrolase region spans residues 48–228 (ANGTTYNAYA…PFRSFVAQAL (181 aa)). The Fe cation site is built by His-98, Glu-100, Asp-102, His-167, Asp-186, and His-243. The region spanning 276 to 415 (LLIFYVSAYG…EGRAFGRRLA (140 aa)) is the Flavodoxin-like domain.

The protein in the N-terminal section; belongs to the zinc metallo-hydrolase group 3 family. As to quaternary structure, homodimer. FMN serves as cofactor. It depends on Fe cation as a cofactor.

Functionally, low-potential electron donor to a number of redox enzymes. This is Type A flavoprotein fprA (fprA) from Rhodobacter capsulatus (strain ATCC BAA-309 / NBRC 16581 / SB1003).